We begin with the raw amino-acid sequence, 254 residues long: Tumor necrosis factor ligand superfamily member 9 (254 aa).

Over Met1–Pro28 the chain is Cytoplasmic. The chain crosses the membrane as a helical; Signal-anchor for type II membrane protein span at residues Trp29–Leu49. Residues Ala50 to Glu254 lie on the Extracellular side of the membrane. The THD domain occupies Met91–Val240.

This sequence belongs to the tumor necrosis factor family. As to quaternary structure, homotrimer. In terms of tissue distribution, expressed in brain, placenta, lung, skeletal muscle and kidney.

It localises to the membrane. Its function is as follows. Cytokine that binds to TNFRSF9. Induces the proliferation of activated peripheral blood T-cells. May have a role in activation-induced cell death (AICD). May play a role in cognate interactions between T-cells and B-cells/macrophages. In Homo sapiens (Human), this protein is Tumor necrosis factor ligand superfamily member 9 (TNFSF9).